Reading from the N-terminus, the 419-residue chain is Diaminopimelate decarboxylase (419 aa).

Residue Lys-56 is modified to N6-(pyridoxal phosphate)lysine. Pyridoxal 5'-phosphate-binding positions include Gly-234 and 274 to 277 (EPGR). The substrate site is built by Arg-277, Arg-312, and Tyr-316. Cys-343 acts as the Proton donor in catalysis. Substrate contacts are provided by Glu-344 and Tyr-372. Residue Tyr-372 coordinates pyridoxal 5'-phosphate.

This sequence belongs to the Orn/Lys/Arg decarboxylase class-II family. LysA subfamily. Homodimer. Requires pyridoxal 5'-phosphate as cofactor.

It catalyses the reaction meso-2,6-diaminopimelate + H(+) = L-lysine + CO2. The protein operates within amino-acid biosynthesis; L-lysine biosynthesis via DAP pathway; L-lysine from DL-2,6-diaminopimelate: step 1/1. Its function is as follows. Specifically catalyzes the decarboxylation of meso-diaminopimelate (meso-DAP) to L-lysine. The sequence is that of Diaminopimelate decarboxylase from Archaeoglobus fulgidus (strain ATCC 49558 / DSM 4304 / JCM 9628 / NBRC 100126 / VC-16).